Here is a 565-residue protein sequence, read N- to C-terminus: Oxygen-dependent choline dehydrogenase (565 aa).

Position 7–36 (7–36) interacts with FAD; that stretch reads DYIICGAGSAGNVLATRLTEDPGVTVLLLE. H474 acts as the Proton acceptor in catalysis.

It belongs to the GMC oxidoreductase family. The cofactor is FAD.

It catalyses the reaction choline + A = betaine aldehyde + AH2. The enzyme catalyses betaine aldehyde + NAD(+) + H2O = glycine betaine + NADH + 2 H(+). It participates in amine and polyamine biosynthesis; betaine biosynthesis via choline pathway; betaine aldehyde from choline (cytochrome c reductase route): step 1/1. Functionally, involved in the biosynthesis of the osmoprotectant glycine betaine. Catalyzes the oxidation of choline to betaine aldehyde and betaine aldehyde to glycine betaine at the same rate. The protein is Oxygen-dependent choline dehydrogenase of Burkholderia mallei (strain ATCC 23344).